The primary structure comprises 462 residues: Glutamate--tRNA ligase (462 aa).

Positions 11–21 (PSPTGFIHLGN) match the 'HIGH' region motif. The 'KMSKS' region signature appears at 243–247 (KMSKR). Residue lysine 246 coordinates ATP.

The protein belongs to the class-I aminoacyl-tRNA synthetase family. Glutamate--tRNA ligase type 1 subfamily. In terms of assembly, monomer.

It localises to the cytoplasm. The catalysed reaction is tRNA(Glu) + L-glutamate + ATP = L-glutamyl-tRNA(Glu) + AMP + diphosphate. In terms of biological role, catalyzes the attachment of glutamate to tRNA(Glu) in a two-step reaction: glutamate is first activated by ATP to form Glu-AMP and then transferred to the acceptor end of tRNA(Glu). The sequence is that of Glutamate--tRNA ligase from Albidiferax ferrireducens (strain ATCC BAA-621 / DSM 15236 / T118) (Rhodoferax ferrireducens).